Here is a 334-residue protein sequence, read N- to C-terminus: Protein-methionine-sulfoxide reductase catalytic subunit MsrP (334 aa).

The tat-type signal signal peptide spans 1–44 (MKKNQFLKESDVTAESVFFMKRRQVLKALGISAAAFSLPHAAHA). Mo-molybdopterin-binding positions include asparagine 88, 91 to 92 (YE), cysteine 146, threonine 181, asparagine 233, arginine 238, and 249 to 251 (GIK).

Belongs to the MsrP family. In terms of assembly, heterodimer of a catalytic subunit (MsrP) and a heme-binding subunit (MsrQ). Requires Mo-molybdopterin as cofactor. Post-translationally, predicted to be exported by the Tat system. The position of the signal peptide cleavage has not been experimentally proven.

The protein resides in the periplasm. The enzyme catalyses L-methionyl-[protein] + a quinone + H2O = L-methionyl-(S)-S-oxide-[protein] + a quinol. The catalysed reaction is L-methionyl-[protein] + a quinone + H2O = L-methionyl-(R)-S-oxide-[protein] + a quinol. Functionally, part of the MsrPQ system that repairs oxidized periplasmic proteins containing methionine sulfoxide residues (Met-O), using respiratory chain electrons. Thus protects these proteins from oxidative-stress damage caused by reactive species of oxygen and chlorine generated by the host defense mechanisms. MsrPQ is essential for the maintenance of envelope integrity under bleach stress, rescuing a wide series of structurally unrelated periplasmic proteins from methionine oxidation, including the primary periplasmic chaperone SurA and the lipoprotein Pal. The catalytic subunit MsrP is non-stereospecific, being able to reduce both (R-) and (S-) diastereoisomers of methionine sulfoxide. This Escherichia coli O7:K1 (strain IAI39 / ExPEC) protein is Protein-methionine-sulfoxide reductase catalytic subunit MsrP.